The chain runs to 356 residues: Protein RecA (356 aa).

68 to 75 (GQESSGKT) lines the ATP pocket.

It belongs to the RecA family.

It localises to the cytoplasm. In terms of biological role, can catalyze the hydrolysis of ATP in the presence of single-stranded DNA, the ATP-dependent uptake of single-stranded DNA by duplex DNA, and the ATP-dependent hybridization of homologous single-stranded DNAs. It interacts with LexA causing its activation and leading to its autocatalytic cleavage. The polypeptide is Protein RecA (Thermotoga petrophila (strain ATCC BAA-488 / DSM 13995 / JCM 10881 / RKU-1)).